Reading from the N-terminus, the 485-residue chain is Protein nucleotidyltransferase YdiU (485 aa).

Positions 85, 87, 88, 108, 120, 121, 171, and 178 each coordinate ATP. The active-site Proton acceptor is the Asp249. Residues Asn250 and Asp259 each contribute to the Mg(2+) site. Asp259 contacts ATP. A disordered region spans residues 462-485; the sequence is LPTTPNYQDPPADGDRSYQTFCGT.

It belongs to the SELO family. It depends on Mg(2+) as a cofactor. Mn(2+) serves as cofactor.

The enzyme catalyses L-seryl-[protein] + ATP = 3-O-(5'-adenylyl)-L-seryl-[protein] + diphosphate. It catalyses the reaction L-threonyl-[protein] + ATP = 3-O-(5'-adenylyl)-L-threonyl-[protein] + diphosphate. The catalysed reaction is L-tyrosyl-[protein] + ATP = O-(5'-adenylyl)-L-tyrosyl-[protein] + diphosphate. It carries out the reaction L-histidyl-[protein] + UTP = N(tele)-(5'-uridylyl)-L-histidyl-[protein] + diphosphate. The enzyme catalyses L-seryl-[protein] + UTP = O-(5'-uridylyl)-L-seryl-[protein] + diphosphate. It catalyses the reaction L-tyrosyl-[protein] + UTP = O-(5'-uridylyl)-L-tyrosyl-[protein] + diphosphate. Its function is as follows. Nucleotidyltransferase involved in the post-translational modification of proteins. It can catalyze the addition of adenosine monophosphate (AMP) or uridine monophosphate (UMP) to a protein, resulting in modifications known as AMPylation and UMPylation. The polypeptide is Protein nucleotidyltransferase YdiU (Teredinibacter turnerae (strain ATCC 39867 / T7901)).